The chain runs to 79 residues: Conotoxin VnMSGL-0122 (79 aa).

The first 20 residues, 1 to 20 (MSGLGIMVLALLLLVFMATS), serve as a signal peptide directing secretion. A propeptide spanning residues 21 to 44 (HQDGGGKQATQRDAINVRRRRSIT) is cleaved from the precursor. Disulfide bonds link Cys-52/Cys-64, Cys-56/Cys-73, and Cys-63/Cys-77. At Leu-78 the chain carries Leucine amide.

It belongs to the conotoxin O3 superfamily. As to expression, expressed by the venom duct.

Its subcellular location is the secreted. The polypeptide is Conotoxin VnMSGL-0122 (Conus ventricosus (Mediterranean cone)).